The primary structure comprises 256 residues: Pimeloyl-[acyl-carrier protein] methyl ester esterase (256 aa).

Residues 15 to 242 enclose the AB hydrolase-1 domain; sequence HLVLLHGWGL…AAHAPFISHP (228 aa). Substrate is bound by residues W22, 82–83, and 143–147; these read SL and FLALQ. S82 (nucleophile) is an active-site residue. Catalysis depends on residues D207 and H235. H235 lines the substrate pocket.

The protein belongs to the AB hydrolase superfamily. Carboxylesterase BioH family. In terms of assembly, monomer.

The protein localises to the cytoplasm. It carries out the reaction 6-carboxyhexanoyl-[ACP] methyl ester + H2O = 6-carboxyhexanoyl-[ACP] + methanol + H(+). Its pathway is cofactor biosynthesis; biotin biosynthesis. In terms of biological role, the physiological role of BioH is to remove the methyl group introduced by BioC when the pimeloyl moiety is complete. It allows to synthesize pimeloyl-ACP via the fatty acid synthetic pathway through the hydrolysis of the ester bonds of pimeloyl-ACP esters. The polypeptide is Pimeloyl-[acyl-carrier protein] methyl ester esterase (Salmonella agona (strain SL483)).